We begin with the raw amino-acid sequence, 486 residues long: Serine/threonine-protein kinase 4 (486 aa).

Positions Phe29–Val280 constitute a Protein kinase domain. Residues Leu35–Val43 and Lys58 contribute to the ATP site. Asp148 serves as the catalytic Proton acceptor. Phosphothreonine; by autocatalysis is present on Thr182. Residues Ile288–Thr324 adopt a coiled-coil conformation. The segment at Glu305 to Ala332 is disordered. Residues Asp312–Asp325 are compositionally biased toward acidic residues. Residues Tyr432–Lys479 form the SARAH domain.

Belongs to the protein kinase superfamily. STE Ser/Thr protein kinase family. STE20 subfamily. In terms of assembly, homodimer; mediated via the coiled-coil region. It depends on Mg(2+) as a cofactor. In terms of processing, proteolytically cleaved by caspase-3 during apoptosis at Asp-325 resulting in a 37 kDa form. Proteolytic cleavage results in kinase activation and nuclear translocation of the truncated form (MST1/N).

It localises to the cytoplasm. Its subcellular location is the nucleus. It catalyses the reaction L-seryl-[protein] + ATP = O-phospho-L-seryl-[protein] + ADP + H(+). It carries out the reaction L-threonyl-[protein] + ATP = O-phospho-L-threonyl-[protein] + ADP + H(+). Its activity is regulated as follows. The C-terminal non-catalytic region inhibits the kinase activity, the enzyme is activated by caspase-cleavage. Homodimerization and autophosphorylation of Thr-182 is also required for full activation. Functionally, stress-activated, pro-apoptotic kinase which, following caspase-cleavage, enters the nucleus and induces chromatin condensation followed by internucleosomal DNA fragmentation. Key component of the Hippo signaling pathway which plays a pivotal role in organ size control and tumor suppression by restricting proliferation and promoting apoptosis. The core of this pathway is composed of a kinase cascade wherein STK3/MST2 and STK4/MST1, in complex with its regulatory protein SAV1, phosphorylates and activates LATS1/2 in complex with its regulatory protein MOB1, which in turn phosphorylates and inactivates YAP1 oncoprotein and WWTR1/TAZ. Phosphorylation of YAP1 by LATS2 inhibits its translocation into the nucleus to regulate cellular genes important for cell proliferation, cell death, and cell migration. Phosphorylates 'Ser-14' of histone H2B (H2BS14ph) during apoptosis. Phosphorylates FOXO3 upon oxidative stress, which results in its nuclear translocation and cell death initiation. The chain is Serine/threonine-protein kinase 4 (STK4) from Gallus gallus (Chicken).